The chain runs to 314 residues: Malate dehydrogenase (314 aa).

Residues 11–16 and D35 contribute to the NAD(+) site; that span reads GSGNIG. The substrate site is built by R84 and R90. NAD(+) is bound by residues N97 and 120 to 122; that span reads ITN. Substrate-binding residues include N122 and R153. H177 functions as the Proton acceptor in the catalytic mechanism.

It belongs to the LDH/MDH superfamily. MDH type 3 family.

It catalyses the reaction (S)-malate + NAD(+) = oxaloacetate + NADH + H(+). Functionally, catalyzes the reversible oxidation of malate to oxaloacetate. In Rickettsia felis (strain ATCC VR-1525 / URRWXCal2) (Rickettsia azadi), this protein is Malate dehydrogenase.